A 252-amino-acid polypeptide reads, in one-letter code: UPF0246 protein AM1_4276 (252 aa).

Belongs to the UPF0246 family.

The sequence is that of UPF0246 protein AM1_4276 from Acaryochloris marina (strain MBIC 11017).